The primary structure comprises 275 residues: uncharacterized protein (275 aa).

NAD(+) is bound by residues 20 to 22 (RGQ), 41 to 42 (DI), 80 to 81 (DV), and Asn-107. A substrate-binding site is contributed by Ser-160. Tyr-173 (proton acceptor) is an active-site residue. Residues Lys-177 and 206 to 208 (VET) contribute to the NAD(+) site.

It belongs to the short-chain dehydrogenases/reductases (SDR) family.

This is an uncharacterized protein from Mycolicibacterium paratuberculosis (strain ATCC BAA-968 / K-10) (Mycobacterium paratuberculosis).